The following is a 962-amino-acid chain: Glycine dehydrogenase (decarboxylating) (962 aa).

At Lys-709 the chain carries N6-(pyridoxal phosphate)lysine.

The protein belongs to the GcvP family. The glycine cleavage system is composed of four proteins: P, T, L and H. It depends on pyridoxal 5'-phosphate as a cofactor.

It catalyses the reaction N(6)-[(R)-lipoyl]-L-lysyl-[glycine-cleavage complex H protein] + glycine + H(+) = N(6)-[(R)-S(8)-aminomethyldihydrolipoyl]-L-lysyl-[glycine-cleavage complex H protein] + CO2. In terms of biological role, the glycine cleavage system catalyzes the degradation of glycine. The P protein binds the alpha-amino group of glycine through its pyridoxal phosphate cofactor; CO(2) is released and the remaining methylamine moiety is then transferred to the lipoamide cofactor of the H protein. This chain is Glycine dehydrogenase (decarboxylating), found in Shewanella sp. (strain MR-7).